The following is a 1177-amino-acid chain: MPYIEKLELKGFKSYGNKKVVIPFSKGFTAIVGANGSGKSNIGDAILFVLGGLSAKAMRASRISDLIFAGSKNEPPAKYAEVAIYFNNEDRGFPIDEDEVVIRRRVYPDGRSSYWLNGRRATRSEILDILTAAMISPDGYNIVLQGDITKFIKMSPLERRLLIDDISGIAEYDSKKEKALEELKQAEENLARVDLLIKEVKKQLDKLEKERNDALRYLDLKDKLEKAKVSLLLGEIKILETQIKEGEKRRAEIEEEIQKIEKEIEKIGKEIVEKVKVLREIEERIEKESGEEAIQITKKIGEVTSKIELTKRNIEVAKEELEDAQRRLAKTKEELRKVLSEIEKSKGAITRWKKRRDALINEIKKKEEERNVLVVKLGEIDKTFGAAREEFDSVVKELEETTRKMYEIEGNIRRLQEEKEKLHSRILFLRAKLPGIKEKINEFKAVVEDKRAEISEIEGKLSTIQAKRIKVEKEIEAKSNELEKVSKELESSERELIAAEAQREVRGNRAAEELKRSGIGGIYGTLAELIKVKDEAYALAIEVALGNRADNVVVEDELVAEKAIKYLKEHKLGRLTFLPLNKIKPKHVDSSVGLPAVDVIEYDQKIENAVKFALGDTVIVNSMEEARPHIGKVRMVTIEGELYERSGAITGGHFRARGLAVDTTKLREKVESLRRRKEALEGELNSLKIELRSLENASFELRIKLSDEKKELELASKDLNRLLEEENAVKEEIEESERKIQEIEQKIENEKSELAKLRGRIQRLERKKEKLKKALENPEARELMEKIRIIDGEISSLKEELSRIESRIESLESRLNEELLPRKASLEEEIEGLVNKINALKNNISENEKALELLNKELEKLKSIEENIKGEIRTLREKRKKLEEDISKLREKKEVLQRKLQELEIEANTLKVRDAQLNAQLEEKKYQLTHYDKNLIKSIKEIPLDLEKVKKEIEKMEEEIRSLEPVNMKAIEDFEIVERRYLELKSKREKLEAEKESIIEFINEIEKEKKNVFMRTFEAISRNFSEIFAKLSPGGSARLILENPEDPFSGGLEIEAKPAGKDVKRIEAMSGGEKALTALAFVFAIQKFKPAPFYLFDEIDAHLDDANVKRVADLIKESSKESQFIVITLRDVMMANADKIIGVSMRDGVSKVVSLSLEKAMKILEEIRKKQGWEHGN.

ATP is bound at residue 34–41 (ANGSGKSN). Residues 167–506 (SGIAEYDSKK…IAAEAQREVR (340 aa)) are a coiled coil. Residues 521 to 627 (GIYGTLAELI…VIVNSMEEAR (107 aa)) form the SMC hinge domain. Positions 659–1012 (LAVDTTKLRE…NEIEKEKKNV (354 aa)) form a coiled coil.

It belongs to the SMC family. Homodimer.

Its subcellular location is the cytoplasm. Required for chromosome condensation and partitioning. Binds single-stranded but not double-stranded DNA. This chain is Chromosome partition protein Smc, found in Pyrococcus furiosus (strain ATCC 43587 / DSM 3638 / JCM 8422 / Vc1).